The primary structure comprises 164 residues: MPDQLNSRVETCYQQAEAFFKRTFKRPVVSFQLRGQKAGVAHLHENLLRFNPQLYKENAEDFLRQTVPHEVAHLIAHQLFGGSIQPHGEEWQLIMRGVYELPPNRCHTYAVKRRSVIRYIYRCPCPDSDFPFTAQRHGMVRKGRRYLCRRCREPLVFSGETRTE.

The 144-residue stretch at 13 to 156 folds into the SprT-like domain; that stretch reads YQQAEAFFKR…LCRRCREPLV (144 aa). Histidine 69 serves as a coordination point for Zn(2+). The active site involves glutamate 70. Histidine 73 serves as a coordination point for Zn(2+).

The protein belongs to the SprT family. It depends on Zn(2+) as a cofactor.

Its subcellular location is the cytoplasm. The protein is Protein SprT of Pseudomonas syringae pv. syringae (strain B728a).